A 134-amino-acid chain; its full sequence is Small ribosomal subunit protein bS6 (134 aa).

Belongs to the bacterial ribosomal protein bS6 family.

Its function is as follows. Binds together with bS18 to 16S ribosomal RNA. This chain is Small ribosomal subunit protein bS6, found in Chlorobium phaeobacteroides (strain BS1).